We begin with the raw amino-acid sequence, 250 residues long: Vitamin B12 import ATP-binding protein BtuD (250 aa).

The ABC transporter domain maps to 3 to 233; it reads LRQASVLPRL…EVLSPVFGVA (231 aa). 29–36 is a binding site for ATP; it reads GPNGAGKS.

Belongs to the ABC transporter superfamily. Vitamin B12 importer (TC 3.A.1.13.1) family. As to quaternary structure, the complex is composed of two ATP-binding proteins (BtuD), two transmembrane proteins (BtuC) and a solute-binding protein (BtuF).

It localises to the cell inner membrane. The catalysed reaction is an R-cob(III)alamin(out) + ATP + H2O = an R-cob(III)alamin(in) + ADP + phosphate + H(+). Its function is as follows. Part of the ABC transporter complex BtuCDF involved in vitamin B12 import. Responsible for energy coupling to the transport system. The protein is Vitamin B12 import ATP-binding protein BtuD of Pectobacterium atrosepticum (strain SCRI 1043 / ATCC BAA-672) (Erwinia carotovora subsp. atroseptica).